The primary structure comprises 621 residues: Rab11 family-interacting protein 4A (621 aa).

2 EF-hand domains span residues 14 to 49 (AFLKKLKEVFDVCDEDADGYIRVEHFVDLGLQFGQG) and 47 to 82 (GQGDEVKKFAKYLDPNAHGRINFKDFCHGVFAIKGC). The Ca(2+) site is built by Asp27, Asp29, Asp31, Tyr33, His38, Asp60, Asn62, Arg66, and Asp71. Disordered regions lie at residues 132–172 (YSDE…KEEG) and 203–243 (DYGE…GQTP). Positions 151 to 161 (AADSGAGSESS) are enriched in low complexity. The span at 162–172 (EGGRQDDKEEG) shows a compositional bias: basic and acidic residues. Polar residues predominate over residues 225 to 243 (TNGFSDLGSSLPSSAGQTP). The stretch at 348 to 556 (DLKSKLKQEN…LNGQILSLSL (209 aa)) forms a coiled coil. Positions 558–620 (EAKNLFACHT…DHNPSILEIK (63 aa)) constitute an FIP-RBD domain.

In terms of assembly, homodimer. Forms a complex with Rab11 (rab11a or rab11b) and arf6. In terms of tissue distribution, isoform 1 is predominantly expressed in neural tissues. Isoform B is expressed ubiquitously. In the developing retina, it is expressed in progenitors throughout the retina at early stages and becomes restricted to the ganglion cell layer and ciliary marginal zone as differentiation proceeds.

It is found in the recycling endosome membrane. Its subcellular location is the cleavage furrow. It localises to the midbody. The protein localises to the cytoplasmic vesicle. Acts as a regulator of endocytic traffic by participating in membrane delivery. Required for the abscission step in cytokinesis, possibly by acting as an 'address tag' delivering recycling endosome membranes to the cleavage furrow during late cytokinesis. May play a role in differentiation during retinal development. In Danio rerio (Zebrafish), this protein is Rab11 family-interacting protein 4A (rab11fip4a).